Reading from the N-terminus, the 216-residue chain is Neural cell adhesion molecule L1.2 (216 aa).

The region spanning 1 to 64 (EFFIHYLRKD…QTAGARVMEV (64 aa)) is the Fibronectin type-III domain. At 1–73 (EFFIHYLRKD…VKSGFVTESW (73 aa)) the chain is on the extracellular side. N-linked (GlcNAc...) asparagine glycosylation is found at N22 and N46. Residues 74-94 (FIGLISALVLLLLVLLILCFI) form a helical membrane-spanning segment. At 95-216 (KRSKGGKYSV…GLPNSAALLD (122 aa)) the chain is on the cytoplasmic side. 2 disordered regions span residues 127–149 (YRSLESDNEEKRTASQPSLCEDS) and 173–216 (DESL…ALLD). The span at 128 to 139 (RSLESDNEEKRT) shows a compositional bias: basic and acidic residues.

Belongs to the immunoglobulin superfamily. L1/neurofascin/NgCAM family. As to expression, expressed in many postmitotic neurons in 16-36 hours embryos. Little or no expression in the olfactory placode, the anterior lateral line/acoustic ganglia complex, the posterior lateral line ganglion, late-developing hindbrain neurons and some Rohon-Beard cells in the spinal cord.

The protein resides in the cell membrane. The protein localises to the cell projection. It localises to the growth cone. Its function is as follows. Cell adhesion molecule with an important role in the development of the nervous system. Involved in neuron-neuron adhesion, neurite fasciculation, outgrowth of neurites, etc. Binds to axonin on neurons. The chain is Neural cell adhesion molecule L1.2 (nadl1.2) from Danio rerio (Zebrafish).